The sequence spans 427 residues: Probable protein phosphatase 2C 64 (427 aa).

Residues 1–36 form a disordered region; that stretch reads MGNCVARSGTAVDAGGDGGEDGKRRRRRWKAPREDQ. Residues 53 to 331 enclose the PPM-type phosphatase domain; that stretch reads TATVYTQQGR…DDCAVVCLYL (279 aa). Residues Asp89, Gly90, Asp276, and Asp322 each coordinate Mn(2+).

The protein belongs to the PP2C family. It depends on Mg(2+) as a cofactor. Mn(2+) is required as a cofactor.

The enzyme catalyses O-phospho-L-seryl-[protein] + H2O = L-seryl-[protein] + phosphate. It catalyses the reaction O-phospho-L-threonyl-[protein] + H2O = L-threonyl-[protein] + phosphate. The sequence is that of Probable protein phosphatase 2C 64 from Oryza sativa subsp. japonica (Rice).